The primary structure comprises 1614 residues: Low-density lipoprotein receptor-related protein 5 (1614 aa).

The N-terminal stretch at 1–30 (METAPTRAPPPPPPPLLLLVLYCSLVPAAA) is a signal peptide. The tract at residues 31-287 (SPLLLFANRR…YSPMDIQVLS (257 aa)) is beta-propeller 1. Topologically, residues 31 to 1383 (SPLLLFANRR…PPSDDIPAHS (1353 aa)) are extracellular. LDL-receptor class B repeat units lie at residues 74 to 118 (GAVY…DWVG), 119 to 161 (KKLY…DPAH), 162 to 205 (GYMY…DLEE), 206 to 246 (QKLY…TLSG), and 247 to 289 (DTLY…LSQE). N-linked (GlcNAc...) asparagine glycans are attached at residues asparagine 92 and asparagine 137. One can recognise an EGF-like 1 domain in the interval 294–336 (FHTPCEEDNGGCSHLCLLSPREPFYSCACPTGVQLQDNGKTCK). Cystine bridges form between cysteine 298/cysteine 309, cysteine 305/cysteine 320, and cysteine 322/cysteine 335. The tract at residues 340 to 601 (EEVLLLARRT…AVNVAKVVGT (262 aa)) is beta-propeller 2. LDL-receptor class B repeat units follow at residues 384 to 426 (GYVY…DWVA), 427 to 469 (RNLY…HPVM), 470 to 513 (GLMY…DLQE), 514 to 556 (GKLY…LGDF), and 557 to 599 (IYWT…AKVV). N-linked (GlcNAc...) asparagine glycosylation is found at asparagine 445 and asparagine 498. In terms of domain architecture, EGF-like 2 spans 600–640 (GTNPCADGNGGCSHLCFFTPRATKCGCPIGLELLSDMKTCI). 3 disulfides stabilise this stretch: cysteine 604–cysteine 615, cysteine 611–cysteine 624, and cysteine 626–cysteine 639. Residues 643 to 902 (EAFLVFTSRA…VFHSSRQDGL (260 aa)) form a beta-propeller 3 region. LDL-receptor class B repeat units follow at residues 686-728 (NHIY…DWMG), 729-771 (KNLY…DPTK), 772-814 (GYIY…DYAD), 815-854 (QRLY…TQYS), and 855-897 (DYIY…FHSS). An N-linked (GlcNAc...) asparagine glycan is attached at asparagine 704. Residue asparagine 877 is glycosylated (N-linked (GlcNAc...) asparagine). The EGF-like 3 domain occupies 901–941 (GLNDCVHSNGQCGQLCLAIPGGHRCGCASHYTLDPSSRNCS). 3 disulfides stabilise this stretch: cysteine 905–cysteine 916, cysteine 912–cysteine 925, and cysteine 927–cysteine 940. The interval 944-1211 (STFLLFSQKF…AVEEVSLEEF (268 aa)) is beta-propeller 4. LDL-receptor class B repeat units follow at residues 988–1034 (KFIY…DIYS), 1035–1077 (RTLF…NAER), 1078–1122 (GYMY…DNAL), 1123–1164 (GKLF…VLGR), and 1165–1206 (HLYW…VEEV). The segment at 1002–1025 (AKDDGTQPSMLTSPSQSLSPDRQP) is disordered. Residues 1007-1021 (TQPSMLTSPSQSLSP) are compositionally biased toward polar residues. The 42-residue stretch at 1212 to 1253 (SAHPCARDNGGCSHICIAKGDGTPRCSCPVHLVLLQNLLTCG) folds into the EGF-like 4 domain. 12 cysteine pairs are disulfide-bonded: cysteine 1216–cysteine 1227, cysteine 1223–cysteine 1237, cysteine 1239–cysteine 1252, cysteine 1258–cysteine 1272, cysteine 1265–cysteine 1285, cysteine 1279–cysteine 1294, cysteine 1297–cysteine 1309, cysteine 1304–cysteine 1322, cysteine 1316–cysteine 1331, cysteine 1335–cysteine 1347, cysteine 1342–cysteine 1360, and cysteine 1354–cysteine 1369. 3 LDL-receptor class A domains span residues 1257–1295 (TCSP…EGCP), 1296–1332 (VCSA…ANCD), and 1334–1370 (VCLP…LMCE). The chain crosses the membrane as a helical span at residues 1384-1406 (SAIGPVIGIILSLFVMGGVYFVC). At 1407–1614 (QRVMCQRYTG…PPPSPCTDSS (208 aa)) the chain is on the cytoplasmic side. Residues 1474-1498 (RNHVTGASSSSSSSTKATLYPPILN) are disordered. The PPPSP motif A motif lies at 1499 to 1505 (PPPSPAT). The short motif at 1537-1544 (PPTTPCST) is the PPPSP motif B element. Positions 1567–1599 (SDSDPYPPPPTPHSQYLSAEDSCPPSPGTERSY) are disordered. A PPPSP motif C motif is present at residues 1573–1580 (PPPPTPHS). Residues 1590–1595 (PPSPGT) carry the PPPSP motif D motif. The short motif at 1604–1611 (PPPPSPCT) is the PPPSP motif E element.

It belongs to the LDLR family. As to quaternary structure, homodimer; disulfide-linked. Forms phosphorylated oligomer aggregates on Wnt-signaling. Component of a WNT-signaling complex that contains a WNT protein, a FZD protein and LRP5 or LRP6. Interacts with FZD8; the interaction is formed on WNT-binding and signaling. Interacts (via the phosphorylated PPPSP motif domains) with AXIN1; the interaction prevents inhibition of beta-catenin phosphorylation and signaling and is enhanced in the presence of GSK3B and WNT1 or WNT3A. Interacts (via beta-propeller regions 3 and 4) with DKK1; the interaction, enhanced by MESD and/or KREMEN, inhibits beta-catenin signaling by preventing GSK3-mediated phosphorylation of the PPPSP motifs and subsequent, AXIN1 binding. Interacts with CSNK1E. Interacts with SOST; the interaction antagonizes canonical Wnt signaling. Interacts with APCDD1. Interacts with MESD; the interaction prevents the formation of LRP5 aggregates, targets LRP5 to the plasma membrane and, when complexed with KREMEN2, increases DKK1 binding. Interacts with CAPRIN2. In terms of processing, phosphorylation of cytoplasmic PPPSP motifs regulates the signal transduction of the Wnt signaling pathway through acting as a docking site for AXIN1. In terms of tissue distribution, widely expressed, with the highest expression levels in liver, heart, and lung and the lowest levels in brain and spleen.

Its subcellular location is the membrane. The protein resides in the endoplasmic reticulum. In terms of biological role, acts as a coreceptor with members of the frizzled family of seven-transmembrane spanning receptors to transduce signal by Wnt proteins. Activates the canonical Wnt signaling pathway that controls cell fate determination and self-renewal during embryonic development and adult tissue regeneration. In particular, may play an important role in the development of the posterior patterning of the epiblast during gastrulation. During bone development, regulates osteoblast proliferation and differentiation thus determining bone mass. Mechanistically, the formation of the signaling complex between Wnt ligand, frizzled receptor and LRP5 coreceptor promotes the recruitment of AXIN1 to LRP5, stabilizing beta-catenin/CTNNB1 and activating TCF/LEF-mediated transcriptional programs. Acts as a coreceptor for non-Wnt proteins, such as norrin/NDP. Binding of norrin/NDP to frizzled 4/FZD4-LRP5 receptor complex triggers beta-catenin/CTNNB1-dependent signaling known to be required for retinal vascular development. Plays a role in controlling postnatal vascular regression in retina via macrophage-induced endothelial cell apoptosis. The chain is Low-density lipoprotein receptor-related protein 5 from Mus musculus (Mouse).